A 522-amino-acid polypeptide reads, in one-letter code: DEAD-box ATP-dependent RNA helicase 1 (522 aa).

A Q motif motif is present at residues 30–59; that stretch reads CALDTLPCLNPKLKKALENMGISSLFPVQV. The 232-residue stretch at 66–297 folds into the Helicase ATP-binding domain; sequence IGPGGFERDI…QLDLHHPLFM (232 aa). 79-86 provides a ligand contact to ATP; it reads SPTGSGKT. Positions 207-210 match the DEAD box motif; it reads DETD. Residues 325 to 475 form the Helicase C-terminal domain; the sequence is YLVALLKSWE…PIPPTSLDSI (151 aa). The segment at 490–522 is disordered; that stretch reads VESEAPKKGRQAFRHNSRTGNSQTKLNKPRSEA. A compositionally biased stretch (basic residues) spans 497 to 506; it reads KGRQAFRHNS.

It belongs to the DEAD box helicase family. DDX51/DBP6 subfamily.

The catalysed reaction is ATP + H2O = ADP + phosphate + H(+). This chain is DEAD-box ATP-dependent RNA helicase 1 (RH1), found in Arabidopsis thaliana (Mouse-ear cress).